Reading from the N-terminus, the 775-residue chain is Subtilisin-like protease SBT1.2 (775 aa).

A signal peptide spans 1-20 (MEPKPFFLCIIFLLFCSSSS). The Inhibitor I9 domain occupies 27–111 (TYIVQLHPNS…AVRPDHVLQV (85 aa)). Positions 116–618 (SYKFLGLDGF…AGHVNPQKAI (503 aa)) constitute a Peptidase S8 domain. Residues D146 and H222 each act as charge relay system in the active site. The PA domain maps to 388–470 (GGDKGSEFCL…YTESVLLKAY (83 aa)). Residues N472 and N544 are each glycosylated (N-linked (GlcNAc...) asparagine). The active-site Charge relay system is S552. N-linked (GlcNAc...) asparagine glycosylation occurs at N652.

It belongs to the peptidase S8 family. In terms of tissue distribution, mostly expressed in leaves and cotyledons (especially in epidermal cells), and, to a lower extent, in floral buds, stems, and siliques. Strongly expressed in stomatal precursor cells (meristemoids and guard mother cells).

The protein resides in the secreted. It is found in the extracellular space. The protein localises to the apoplast. Its subcellular location is the cell membrane. Its function is as follows. Serine protease involved in the negative regulation of stomatal density and distribution. Not active on EPFL6 (AC Q1PEY6). Positive regulator of water use efficiency (WUE). The sequence is that of Subtilisin-like protease SBT1.2 from Arabidopsis thaliana (Mouse-ear cress).